The sequence spans 208 residues: Large ribosomal subunit protein uL4 (208 aa).

The segment at 45-83 is disordered; it reads RQGTHKSKTRAEVRGGGRKPYRQKGTGNARQGSTRSPLM. Over residues 69–80 the composition is skewed to polar residues; it reads GTGNARQGSTRS.

The protein belongs to the universal ribosomal protein uL4 family. As to quaternary structure, part of the 50S ribosomal subunit.

In terms of biological role, one of the primary rRNA binding proteins, this protein initially binds near the 5'-end of the 23S rRNA. It is important during the early stages of 50S assembly. It makes multiple contacts with different domains of the 23S rRNA in the assembled 50S subunit and ribosome. Its function is as follows. Forms part of the polypeptide exit tunnel. The protein is Large ribosomal subunit protein uL4 of Chlorobium luteolum (strain DSM 273 / BCRC 81028 / 2530) (Pelodictyon luteolum).